We begin with the raw amino-acid sequence, 400 residues long: Peroxisome biogenesis factor 16 (400 aa).

The disordered stretch occupies residues 176-226 (QKQFQNKRPAVTMSINNNNNINNNDNNNINNNNNTNDDNFNNNNNNNNNRR). Over residues 190–224 (INNNNNINNNDNNNINNNNNTNDDNFNNNNNNNNN) the composition is skewed to low complexity.

The protein belongs to the peroxin-16 family.

The protein localises to the cytoplasm. In terms of biological role, required for peroxisome membrane biogenesis. In Dictyostelium discoideum (Social amoeba), this protein is Peroxisome biogenesis factor 16 (pex16).